A 263-amino-acid polypeptide reads, in one-letter code: Methylesterase 3 (263 aa).

S85 functions as the Acyl-ester intermediate in the catalytic mechanism. Active-site charge relay system residues include D213 and H241.

The protein belongs to the AB hydrolase superfamily. Methylesterase family.

It carries out the reaction methyl (indol-3-yl)acetate + H2O = (indol-3-yl)acetate + methanol + H(+). It catalyses the reaction methyl (-)-jasmonate + H2O = jasmonate + methanol + H(+). It participates in plant hormone biosynthesis. The protein operates within lipid metabolism; oxylipin biosynthesis. Methylesterase shown to have carboxylesterase activity, methyl indole-3-acetic acid (MeIAA) esterase activity and methyl jasmonate (MeJA) esterase activity in vitro. The chain is Methylesterase 3 from Arabidopsis thaliana (Mouse-ear cress).